Here is a 430-residue protein sequence, read N- to C-terminus: Enolase (430 aa).

Gln165 provides a ligand contact to (2R)-2-phosphoglycerate. The Proton donor role is filled by Glu207. Positions 244, 287, and 314 each coordinate Mg(2+). 4 residues coordinate (2R)-2-phosphoglycerate: Lys339, Arg368, Ser369, and Lys390. The active-site Proton acceptor is Lys339.

The protein belongs to the enolase family. Component of the RNA degradosome, a multiprotein complex involved in RNA processing and mRNA degradation. The cofactor is Mg(2+).

Its subcellular location is the cytoplasm. The protein resides in the secreted. The protein localises to the cell surface. The catalysed reaction is (2R)-2-phosphoglycerate = phosphoenolpyruvate + H2O. It participates in carbohydrate degradation; glycolysis; pyruvate from D-glyceraldehyde 3-phosphate: step 4/5. In terms of biological role, catalyzes the reversible conversion of 2-phosphoglycerate (2-PG) into phosphoenolpyruvate (PEP). It is essential for the degradation of carbohydrates via glycolysis. The polypeptide is Enolase (Xanthomonas oryzae pv. oryzae (strain MAFF 311018)).